We begin with the raw amino-acid sequence, 97 residues long: YcgL domain-containing protein PputGB1_4120 (97 aa).

The 85-residue stretch at 3 to 87 (RICSIYKSPR…AEDEYIEHLP (85 aa)) folds into the YcgL domain.

In Pseudomonas putida (strain GB-1), this protein is YcgL domain-containing protein PputGB1_4120.